Reading from the N-terminus, the 63-residue chain is Trypsin inhibitor 5 (63 aa).

Positions 1-21 (MASVAESSGVVEVIELISDGG) are cleaved as a signal peptide. Positions 22 to 34 (NDLPRKIMSGRHG) are excised as a propeptide. 3 disulfide bridges follow: cysteine 37–cysteine 54, cysteine 44–cysteine 56, and cysteine 50–cysteine 62.

This sequence belongs to the protease inhibitor I7 (squash-type serine protease inhibitor) family.

The protein localises to the secreted. Inhibits trypsin. The protein is Trypsin inhibitor 5 of Luffa aegyptiaca (Sponge gourd).